A 281-amino-acid polypeptide reads, in one-letter code: Cell growth regulator with EF hand domain protein 1 (281 aa).

The first 21 residues, 1–21 (MFQWLMQALMLPLLLLPLGRA), serve as a signal peptide directing secretion. 2 EF-hand domains span residues 71–106 (DREQVLLSLFALHDYDQNGQLDGLELLSMLTAALAP) and 115–150 (PVILVVDSVLETQDLDGDGLMTPAELINFPEVPKHT). The Ca(2+) site is built by D84, D86, N88, Q90, E95, D128, D130, D132, and E139. A disordered region spans residues 148–281 (KHTESLPPAL…HSIQLENDEI (134 aa)). Residues 168 to 183 (LLANSPLQSETQQSLG) are compositionally biased toward polar residues. Residues 184 to 213 (TKEEIRGQVEAKRASLEPEQEAGHQTEGKV) are compositionally biased toward basic and acidic residues. 2 positions are modified to phosphoserine: S217 and S228. The span at 237–256 (EGAEEQVEIKDNEGEAKELL) shows a compositional bias: basic and acidic residues.

Post-translationally, probably digested extracellularly by an unknown serine protease generating extremely hydrophobic bioactive peptides.

Its subcellular location is the secreted. Its function is as follows. Mediates cell-cell adhesion in a calcium-dependent manner. Able to inhibit growth in several cell lines. This is Cell growth regulator with EF hand domain protein 1 from Mus musculus (Mouse).